A 308-amino-acid chain; its full sequence is Oxygen-dependent coproporphyrinogen-III oxidase (308 aa).

Ser-100 is a binding site for substrate. Residues His-104 and His-114 each coordinate a divalent metal cation. His-114 serves as the catalytic Proton donor. 116-118 (NFR) is a substrate binding site. Positions 153 and 183 each coordinate a divalent metal cation. Residues 248–283 (YVEFNLVFDRGTIFGLQSGGRTESILSSMPPMATWK) form an important for dimerization region. 266–268 (GGR) lines the substrate pocket.

The protein belongs to the aerobic coproporphyrinogen-III oxidase family. In terms of assembly, homodimer. The cofactor is a divalent metal cation.

It localises to the cytoplasm. The enzyme catalyses coproporphyrinogen III + O2 + 2 H(+) = protoporphyrinogen IX + 2 CO2 + 2 H2O. The protein operates within porphyrin-containing compound metabolism; protoporphyrin-IX biosynthesis; protoporphyrinogen-IX from coproporphyrinogen-III (O2 route): step 1/1. In terms of biological role, involved in the heme biosynthesis. Catalyzes the aerobic oxidative decarboxylation of propionate groups of rings A and B of coproporphyrinogen-III to yield the vinyl groups in protoporphyrinogen-IX. This chain is Oxygen-dependent coproporphyrinogen-III oxidase, found in Francisella tularensis subsp. holarctica (strain OSU18).